Consider the following 150-residue polypeptide: UPF0178 protein Shew_2726 (150 aa).

It belongs to the UPF0178 family.

The sequence is that of UPF0178 protein Shew_2726 from Shewanella loihica (strain ATCC BAA-1088 / PV-4).